Reading from the N-terminus, the 360-residue chain is Peptide chain release factor 1 (360 aa).

An N5-methylglutamine modification is found at Gln235.

The protein belongs to the prokaryotic/mitochondrial release factor family. In terms of processing, methylated by PrmC. Methylation increases the termination efficiency of RF1.

It is found in the cytoplasm. In terms of biological role, peptide chain release factor 1 directs the termination of translation in response to the peptide chain termination codons UAG and UAA. In Cupriavidus pinatubonensis (strain JMP 134 / LMG 1197) (Cupriavidus necator (strain JMP 134)), this protein is Peptide chain release factor 1.